A 125-amino-acid polypeptide reads, in one-letter code: Histone H2A (125 aa).

Positions 1–18 (MSGRGKGGKVKGKSKTRS) are enriched in basic residues. Positions 1–23 (MSGRGKGGKVKGKSKTRSSRAGL) are disordered. Serine 2 carries the post-translational modification N-acetylserine. Glutamine 104 is modified (N5-methylglutamine).

This sequence belongs to the histone H2A family. The nucleosome is a histone octamer containing two molecules each of H2A, H2B, H3 and H4 assembled in one H3-H4 heterotetramer and two H2A-H2B heterodimers. The octamer wraps approximately 147 bp of DNA.

It is found in the nucleus. The protein localises to the chromosome. Its function is as follows. Core component of nucleosome. Nucleosomes wrap and compact DNA into chromatin, limiting DNA accessibility to the cellular machineries which require DNA as a template. Histones thereby play a central role in transcription regulation, DNA repair, DNA replication and chromosomal stability. DNA accessibility is regulated via a complex set of post-translational modifications of histones, also called histone code, and nucleosome remodeling. The chain is Histone H2A from Sepia officinalis (Common cuttlefish).